The following is a 716-amino-acid chain: Protein C-mannosyl-transferase DPY19L3 (716 aa).

The Cytoplasmic segment spans residues 1-43 (MMSIRQRREIRATEVSEDFPAQEENVKLENKLPSGCTSRRLWK). Residues 44-64 (ILSLTIGGTIALCIGLLTSVY) traverse the membrane as a helical segment. At 65–154 (LATLHENDLW…RVLPVQKYLE (90 aa)) the chain is on the lumenal side. The N-linked (GlcNAc...) asparagine glycan is linked to Asn-118. The helical transmembrane segment at 155 to 182 (PVYFYIYTLFGLQAIYVTALYITSWLLS) threads the bilayer. The Cytoplasmic segment spans residues 183 to 184 (GT). The segment at residues 185-197 (WLSGLLAAFWYVT) is an intramembrane region (name=3). At 198-215 (NRIDTTRVEFTIPLRENW) the chain is on the cytoplasmic side. Positions 216-230 (ALPFFAIQIAAITYF) form an intramembrane region, name=4. The Cytoplasmic segment spans residues 231–239 (LRPNLQPLS). A helical membrane pass occupies residues 240 to 256 (ERLTLLAIFISTFLFSL). The Lumenal segment spans residues 257 to 262 (TWQFNQ). Residues 263-279 (FMMLMQALVLFTLDSLD) form a helical membrane-spanning segment. Over 280-289 (MLPAVKATWL) the chain is Cytoplasmic. A helical transmembrane segment spans residues 290-306 (YGIQITSLLLVCILQFF). Residues 307-308 (NS) lie on the Lumenal side of the membrane. The chain crosses the membrane as a helical span at residues 309–323 (MILGSLLISFNLSVF). At 324–338 (IARKLQKNLKTGSFL) the chain is on the cytoplasmic side. Residues 339-359 (NRLGKLLLHLFMVLCLTLFLN) form a helical membrane-spanning segment. The Lumenal portion of the chain corresponds to 360–414 (NIIKKILNLKSDEHIFKFLKAKFGLGATRDFDANLYLCEEAFGLLPFNTFGRLSD). Residues 415–437 (TLLFYAYIFVLSITVIVAFVVAF) form a helical membrane-spanning segment. The Cytoplasmic portion of the chain corresponds to 438–465 (HNLSDSTNQQSVGKMEKGTVDLKPETAY). A helical transmembrane segment spans residues 466-485 (NLIHTILFGFLALSTMRMKY). Over 486-487 (LW) the chain is Lumenal. Residues 488 to 499 (TSHMCVFASFGL) form a helical membrane-spanning segment. At 500–522 (CSPEIWELLLKSVHLYNPKRICI) the chain is on the cytoplasmic side. Residues 523–539 (MRYSVPILILLYLCYKF) traverse the membrane as a helical segment. The Lumenal portion of the chain corresponds to 540-716 (WPGMMDELSE…FHVYKLSRNK (177 aa)). Asn-704 carries N-linked (GlcNAc...) asparagine glycosylation.

Belongs to the dpy-19 family.

The protein localises to the endoplasmic reticulum membrane. It carries out the reaction L-tryptophyl-[protein] + a di-trans,poly-cis-dolichyl beta-D-mannosyl phosphate = C-alpha-D-mannosyl-L-tryptophyl-[protein] + a di-trans,poly-cis-dolichyl phosphate + H(+). It functions in the pathway protein modification; protein glycosylation. C-mannosyltransferase that mediates C-mannosylation of tryptophan residues on target proteins. The reaction occurs on the luminal side of the endoplasmic reticulum and involves the transfer of a mannose unit from a dolichylphosphate mannose (Dol-P-Man) donor to an acceptor protein containing a WxxW or WxxC consensus sequence. C-mannosylates RSPO1, a Wnt signaling regulator, preferentially at the first Trp residue in the sequence WxxW. C-mannosylates the netrin receptor UNC5A, preferentially at the third tryptophan of WxxWxxWxxC sequence. The sequence is that of Protein C-mannosyl-transferase DPY19L3 (DPY19L3) from Pongo abelii (Sumatran orangutan).